The primary structure comprises 644 residues: Forkhead box protein O (644 aa).

The segment at 39-75 (FEPQTRARSNTWPCPRPENFVEPPDELDSTKASNQQL) is disordered. The residue at position 49 (Thr-49) is a Phosphothreonine; by PKB/AKT1. Ser-80 carries the phosphoserine modification. A DNA-binding region (fork-head) is located at residues 100 to 206 (WGNLSYADLI…ETSRYEKRRG (107 aa)). 5 disordered regions span residues 187–210 (KSVR…RAKK), 222–276 (GLND…SPIR), 329–386 (QQQQ…QTLQ), 412–435 (SPNS…DSLN), and 578–612 (QQHL…NSSL). At Ser-195 the chain carries Phosphoserine; by PKB/AKT1. 2 stretches are compositionally biased toward polar residues: residues 226 to 235 (ATPSPSSSVS) and 261 to 270 (RASSNASSCG). Position 264 is a phosphoserine; by PKB/AKT1 (Ser-264). Phosphoserine occurs at positions 267, 268, and 273. A compositionally biased stretch (low complexity) spans 329–340 (QQQQQQQQQQQQ). A compositionally biased stretch (pro residues) spans 350–359 (SQPPPPPYQP). A compositionally biased stretch (low complexity) spans 360–374 (PQLQQQQQQQPSYSL). Positions 412-421 (SPNSVTTTMS) are enriched in polar residues.

Interacts with melt.

The protein localises to the cytoplasm. It is found in the nucleus. Transcription factor involved in the regulation of the insulin signaling pathway. Consistently activates both the downstream target Thor\d4EBP and the feedback control target InR. Involved in negative regulation of the cell cycle, modulating cell growth and proliferation. In response to cellular stresses, such as nutrient deprivation or increased levels of reactive oxygen species, foxo is activated and inhibits growth through the action of target genes such as Thor. Foxo activated in the adult fat body can regulate lifespan in adults; an insulin peptide itself may function as one secondary messenger of insulin-regulated aging. Also regulates Lip4, homolog of human acid lipases, thereby acting as a key modulator of lipid metabolism by insulin signaling and integrates insulin responses to glucose and lipid homeostasis. The polypeptide is Forkhead box protein O (Drosophila pseudoobscura pseudoobscura (Fruit fly)).